The following is a 713-amino-acid chain: Protein argonaute (713 aa).

Residues 18 to 129 (EFIPKEVHFY…IKNIRKHKVV (112 aa)) are N-terminal domain. Residues 164 to 257 (HLWDFVNRDK…FAPQFCNLVF (94 aa)) form the PAZ domain. The tract at residues 213–218 (HIIKYY) is binds 3'-end of gDNA. Residues 346–488 (DVPEIIRNKN…QIMGKLGIKY (143 aa)) form a mid domain region. In terms of domain architecture, Piwi spans 426-699 (CFALIIGKEK…FVKALGKNWK (274 aa)). Positions 457, 479, and 483 each coordinate a divalent metal cation. A binds 5'-phosphorylated end of gDNA region spans residues 457-460 (QNIL). Residues aspartate 504, glutamate 541, and aspartate 570 contribute to the active site. Aspartate 504 is a Mn(2+) binding site. Aspartate 570 contributes to the Mn(2+) binding site. 2 binds 5'-phosphorylated end of gDNA regions span residues 625–632 (HKTPFGSN) and 678–679 (LR). Aspartate 688 is a catalytic residue. Positions 688 and 713 each coordinate Mn(2+).

It belongs to the argonaute family. Long pAgo subfamily. It depends on a divalent metal cation as a cofactor.

With respect to regulation, DNA cleavage is inhibited by EDTA. Functionally, a DNA-guided ssDNA endonuclease that may play a role in defense against invading genetic elements. Uses short ssDNA sequences as guides (gDNA) to bind complementary target strands, resulting in slicing of the target DNA (tDNA). Endonucleolytically cleaves tDNA (the gDNA indicates where to cleave); two major and two minor products are seen which correspond to cleavage sites between nucleotides 9/10, 10/11, 13/14, and 14/15 downstream of the target residue base-paired with the 5'-end of the gDNA. Efficient guide-dependent tDNA cleavage requires a minimal length of 15 bp and is maximal at 19 bp. Prefers gDNA with 5'-phosphorylated purines and 3'-pyrimidines; changing these bases alters the cleavage activity and patterns. Also has guide-independent activity on tDNA called 'chopping'. Probably a first round of guide-independent activity on an invading plasmid or virus would generate guide DNAs for subsequent, more efficient, guide-dependent degradation of invading nucleic acids. Has no activity on substrate with a mismatch at positions 10 and 11, on ssDNA or RNA, nor on DNA:RNA hybrids. Digests longer (750 bp) dsDNA as well as circular plasmid and naked genomic DNA, but not chromatin, in a guide DNA-independent manner. Addition of endogenous histone A3 protects DNA from cleavage, while cleavage is insensitive to methylation. When plasmid encoding active or mutated protein (Ala-541) is transformed into Sulfolobus acidocaldarius about 25-fold fewer transformants are found with active protein; reduced levels of plasmid are found in wild-type transformed cells. While S.acidocaldarius grows at a similar temperature to M.jannaschii (70 to 80 degrees Celsius) it has very different histone-like proteins, which presumably do not protect against MjAgo. Binds ssDNA, dsDNA and DNA-RNA hybrids; binding is most efficient with dsDNA. In Methanocaldococcus jannaschii (strain ATCC 43067 / DSM 2661 / JAL-1 / JCM 10045 / NBRC 100440) (Methanococcus jannaschii), this protein is Protein argonaute.